We begin with the raw amino-acid sequence, 379 residues long: Glucose-1-phosphate adenylyltransferase (379 aa).

Alpha-D-glucose 1-phosphate is bound by residues Tyr-99, Gly-164, 179–180 (EK), and Ser-190.

It belongs to the bacterial/plant glucose-1-phosphate adenylyltransferase family. In terms of assembly, homotetramer.

The catalysed reaction is alpha-D-glucose 1-phosphate + ATP + H(+) = ADP-alpha-D-glucose + diphosphate. It functions in the pathway glycan biosynthesis; glycogen biosynthesis. In terms of biological role, involved in the biosynthesis of ADP-glucose, a building block required for the elongation reactions to produce glycogen. Catalyzes the reaction between ATP and alpha-D-glucose 1-phosphate (G1P) to produce pyrophosphate and ADP-Glc. The chain is Glucose-1-phosphate adenylyltransferase from Bacillus licheniformis (strain ATCC 14580 / DSM 13 / JCM 2505 / CCUG 7422 / NBRC 12200 / NCIMB 9375 / NCTC 10341 / NRRL NRS-1264 / Gibson 46).